Here is a 95-residue protein sequence, read N- to C-terminus: Aspartyl/glutamyl-tRNA(Asn/Gln) amidotransferase subunit C (95 aa).

This sequence belongs to the GatC family. As to quaternary structure, heterotrimer of A, B and C subunits.

The enzyme catalyses L-glutamyl-tRNA(Gln) + L-glutamine + ATP + H2O = L-glutaminyl-tRNA(Gln) + L-glutamate + ADP + phosphate + H(+). It catalyses the reaction L-aspartyl-tRNA(Asn) + L-glutamine + ATP + H2O = L-asparaginyl-tRNA(Asn) + L-glutamate + ADP + phosphate + 2 H(+). Allows the formation of correctly charged Asn-tRNA(Asn) or Gln-tRNA(Gln) through the transamidation of misacylated Asp-tRNA(Asn) or Glu-tRNA(Gln) in organisms which lack either or both of asparaginyl-tRNA or glutaminyl-tRNA synthetases. The reaction takes place in the presence of glutamine and ATP through an activated phospho-Asp-tRNA(Asn) or phospho-Glu-tRNA(Gln). The chain is Aspartyl/glutamyl-tRNA(Asn/Gln) amidotransferase subunit C from Rhizobium rhizogenes (strain K84 / ATCC BAA-868) (Agrobacterium radiobacter).